Reading from the N-terminus, the 666-residue chain is DEAD-box ATP-dependent RNA helicase 30 (666 aa).

The tract at residues 53 to 102 is disordered; that stretch reads PDPNLPRRLPFPSSSSTPTAAAPPDSGEPSRARARTETYRTGDMNPYDLR. Residues 64-76 show a composition bias toward low complexity; that stretch reads PSSSSTPTAAAPP. Residues 80–92 show a composition bias toward basic and acidic residues; that stretch reads EPSRARARTETYR. The short motif at 251-279 is the Q motif element; the sequence is RYFQEANFPDYCMQAIAKSGFVEPTPIQS. The Helicase ATP-binding domain occupies 282 to 457; sequence WPMALKGRDM…RQFLQNPYKV (176 aa). Position 295-302 (295-302) interacts with ATP; that stretch reads AQTGSGKT. The DEAD box motif lies at 405 to 408; it reads DEAD. One can recognise a Helicase C-terminal domain in the interval 485 to 630; it reads RLSKLLSDLM…VVNPALESMA (146 aa). Residues 632 to 666 form a disordered region; that stretch reads SASSMGGGNFRSRGRGGFGNRSGSNSIPIRGRRPY. A compositionally biased stretch (gly residues) spans 636–651; that stretch reads MGGGNFRSRGRGGFGN.

The protein belongs to the DEAD box helicase family. DDX5/DBP2 subfamily.

The protein resides in the nucleus. The catalysed reaction is ATP + H2O = ADP + phosphate + H(+). ATP-dependent RNA helicase involved nonsense-mediated mRNA decay and ribosome biogenesis through rRNA processing. The protein is DEAD-box ATP-dependent RNA helicase 30 of Oryza sativa subsp. japonica (Rice).